The sequence spans 117 residues: NADH-quinone oxidoreductase subunit A (117 aa).

3 helical membrane passes run 4–24 (WIGV…GMLT), 64–84 (LMFV…VSFV), and 86–106 (LGLA…LGLW).

It belongs to the complex I subunit 3 family. NDH-1 is composed of 14 different subunits. Subunits NuoA, H, J, K, L, M, N constitute the membrane sector of the complex.

It localises to the cell membrane. It carries out the reaction a quinone + NADH + 5 H(+)(in) = a quinol + NAD(+) + 4 H(+)(out). Functionally, NDH-1 shuttles electrons from NADH, via FMN and iron-sulfur (Fe-S) centers, to quinones in the respiratory chain. The immediate electron acceptor for the enzyme in this species is believed to be a menaquinone. Couples the redox reaction to proton translocation (for every two electrons transferred, four hydrogen ions are translocated across the cytoplasmic membrane), and thus conserves the redox energy in a proton gradient. The sequence is that of NADH-quinone oxidoreductase subunit A from Desulforamulus reducens (strain ATCC BAA-1160 / DSM 100696 / MI-1) (Desulfotomaculum reducens).